Reading from the N-terminus, the 371-residue chain is Pyruvate dehydrogenase E1 component subunit alpha (371 aa).

Heterodimer of an alpha and a beta chain. The cofactor is thiamine diphosphate.

The enzyme catalyses N(6)-[(R)-lipoyl]-L-lysyl-[protein] + pyruvate + H(+) = N(6)-[(R)-S(8)-acetyldihydrolipoyl]-L-lysyl-[protein] + CO2. The pyruvate dehydrogenase complex catalyzes the overall conversion of pyruvate to acetyl-CoA and CO(2). It contains multiple copies of three enzymatic components: pyruvate dehydrogenase (E1), dihydrolipoamide acetyltransferase (E2) and lipoamide dehydrogenase (E3). In Bacillus cereus, this protein is Pyruvate dehydrogenase E1 component subunit alpha.